The sequence spans 146 residues: NADH-ubiquinone oxidoreductase chain 6 (146 aa).

4 consecutive transmembrane segments (helical) span residues 10–30 (LTAIGMLTPVQSMTCLMILFV), 41–61 (FVLMGMLYVTMYVGAMAMLFL), 75–95 (GTITPLMVTLLAMCLMPLDIT), and 124–144 (AMLLMLTGMMLMLSVMGAMSI).

Belongs to the complex I subunit 6 family.

Its subcellular location is the mitochondrion membrane. The catalysed reaction is a ubiquinone + NADH + 5 H(+)(in) = a ubiquinol + NAD(+) + 4 H(+)(out). Its function is as follows. Core subunit of the mitochondrial membrane respiratory chain NADH dehydrogenase (Complex I) that is believed to belong to the minimal assembly required for catalysis. Complex I functions in the transfer of electrons from NADH to the respiratory chain. The immediate electron acceptor for the enzyme is believed to be ubiquinone. This Debaryomyces hansenii (strain ATCC 36239 / CBS 767 / BCRC 21394 / JCM 1990 / NBRC 0083 / IGC 2968) (Yeast) protein is NADH-ubiquinone oxidoreductase chain 6 (ND6).